The sequence spans 340 residues: tRNA N6-adenosine threonylcarbamoyltransferase (340 aa).

Fe cation-binding residues include His-111 and His-115. Substrate-binding positions include 134–138, Asp-167, Gly-180, and Asn-276; that span reads LVSGG. Residue Asp-304 coordinates Fe cation.

It belongs to the KAE1 / TsaD family. It depends on Fe(2+) as a cofactor.

Its subcellular location is the cytoplasm. It catalyses the reaction L-threonylcarbamoyladenylate + adenosine(37) in tRNA = N(6)-L-threonylcarbamoyladenosine(37) in tRNA + AMP + H(+). Required for the formation of a threonylcarbamoyl group on adenosine at position 37 (t(6)A37) in tRNAs that read codons beginning with adenine. Is involved in the transfer of the threonylcarbamoyl moiety of threonylcarbamoyl-AMP (TC-AMP) to the N6 group of A37, together with TsaE and TsaB. TsaD likely plays a direct catalytic role in this reaction. This Helicobacter pylori (strain G27) protein is tRNA N6-adenosine threonylcarbamoyltransferase.